A 583-amino-acid polypeptide reads, in one-letter code: Exonuclease 3'-5' domain-containing protein 2 (583 aa).

Residues 1–11 (MTRESAVATKR) lie on the Mitochondrial intermembrane side of the membrane. The helical transmembrane segment at 12 to 29 (NWAILAAGVGLVYVLVRH) threads the bilayer. Over 30-583 (RHRLLCPLRR…AGLDAKIKET (554 aa)) the chain is Cytoplasmic. In terms of domain architecture, 3'-5' exonuclease spans 62–228 (TTQWVLNELK…AIYQKLCRDL (167 aa)). 3 residues coordinate a divalent metal cation: aspartate 83, glutamate 85, and aspartate 213. The span at 266-281 (GSGVTRSKGSTQSKSN) shows a compositional bias: polar residues. A disordered region spans residues 266–286 (GSGVTRSKGSTQSKSNKWVPK).

It belongs to the EXD2 family. As to quaternary structure, homodimer. The cofactor is Mg(2+). It depends on Mn(2+) as a cofactor.

Its subcellular location is the mitochondrion membrane. 3'-5' exoribonuclease required for mitochondrial metabolism. The polypeptide is Exonuclease 3'-5' domain-containing protein 2 (Drosophila melanogaster (Fruit fly)).